The chain runs to 101 residues: Small ribosomal subunit protein uS14 (101 aa).

The tract at residues L48 to R69 is disordered. Residues L51–G68 show a composition bias toward basic and acidic residues.

This sequence belongs to the universal ribosomal protein uS14 family. In terms of assembly, part of the 30S ribosomal subunit. Contacts proteins S3 and S10.

In terms of biological role, binds 16S rRNA, required for the assembly of 30S particles and may also be responsible for determining the conformation of the 16S rRNA at the A site. This is Small ribosomal subunit protein uS14 from Stenotrophomonas maltophilia (strain R551-3).